Reading from the N-terminus, the 271-residue chain is TIP41-like protein (271 aa).

Lys106 carries the post-translational modification N6-acetyllysine. The segment at 173–271 is interaction with PPP2CA; it reads RVMPSSFFLL…PVDSQSTPSE (99 aa). Phosphoserine occurs at positions 265 and 270.

It belongs to the TIP41 family. In terms of assembly, interacts with PPP2CA. Interacts with PPP2CB, PPP4C and PPP6C. Interacts with IGBP1; the interaction is dependent on PPP2CA. Associates with a protein phosphatase 2A PP2A(C):IGBP1 complex. Interacts with PPP4C and PPP4R2.

It is found in the cytoplasm. Its function is as follows. May be a allosteric regulator of serine/threonine-protein phosphatase 2A (PP2A). Inhibits catalytic activity of the PP2A(D) core complex in vitro. The PP2A(C):TIPRL complex does not show phosphatase activity. Acts as a negative regulator of serine/threonine-protein phosphatase 4 probably by inhibiting the formation of the active PPP4C:PPP4R2 complex; the function is proposed to implicate it in DNA damage response by promoting H2AX phosphorylated on Ser-140 (gamma-H2AX). May play a role in the regulation of ATM/ATR signaling pathway controlling DNA replication and repair. This is TIP41-like protein (Tiprl) from Mus musculus (Mouse).